A 478-amino-acid polypeptide reads, in one-letter code: Capsid vertex component 1 (478 aa).

The tract at residues 131–184 is disordered; the sequence is PRGPESEGEGGKDGGAGRGDGEASRESPLERIAAEASGPGPGSGRGRSAGGRRA. The segment covering 149–163 has biased composition (basic and acidic residues); that stretch reads GDGEASRESPLERIA. Over residues 169-179 the composition is skewed to gly residues; that stretch reads PGPGSGRGRSA.

It belongs to the herpesviridae CVC1 protein family. As to quaternary structure, interacts (via C-terminus) with capsid vertex component 2/CVC2.

It localises to the virion. Its subcellular location is the host nucleus. Functionally, capsid vertex-specific component that plays a role during viral DNA encapsidation, assuring correct genome cleavage and presumably stabilizing capsids that contain full-length viral genomes. This is Capsid vertex component 1 from Equus caballus (Horse).